Here is an 830-residue protein sequence, read N- to C-terminus: P-selectin (830 aa).

A signal peptide spans 1 to 41 (MANCQIAILYQRFQRVVFGISQLLCFSALISELTNQKEVAA). At 42–771 (WTYHYSTKAY…QAGPLTIQEA (730 aa)) the chain is on the extracellular side. Asn54 and Asn98 each carry an N-linked (GlcNAc...) asparagine glycan. The region spanning 58 to 158 (KYCQNRYTDL…HCLKKKHALC (101 aa)) is the C-type lectin domain. Disulfide bonds link Cys60–Cys158, Cys131–Cys150, Cys163–Cys174, Cys168–Cys183, Cys185–Cys194, Cys200–Cys244, Cys230–Cys257, Cys262–Cys306, Cys292–Cys319, Cys324–Cys368, Cys354–Cys381, Cys386–Cys430, Cys416–Cys443, Cys448–Cys492, Cys478–Cys505, Cys510–Cys554, Cys540–Cys567, Cys572–Cys616, Cys602–Cys629, Cys642–Cys686, Cys672–Cys699, Cys704–Cys748, and Cys734–Cys761. Glu121, Asn123, and Asn124 together coordinate Ca(2+). Asn123 is a binding site for a carbohydrate. A carbohydrate contacts are provided by Glu133 and Asn146. 2 residues coordinate Ca(2+): Asn146 and Asp147. An EGF-like domain is found at 159–195 (YTASCQDMSCSKQGECLETIGNYTCSCYPGFYGPECE). N-linked (GlcNAc...) asparagine glycosylation is present at Asn180. Sushi domains are found at residues 198-259 (RECG…QCLA), 260-321 (AQCP…VCKA), 322-383 (VQCQ…TCEA), 384-445 (ISCE…VCQA), 446-507 (LQCQ…ECQA), 508-569 (IPCT…MCEA), 570-631 (IKCP…TCKG), 640-701 (VQCP…ACRA), and 702-763 (VKCS…TCQA). Residues Asn212 and Asn219 are each glycosylated (N-linked (GlcNAc...) asparagine). Residue Asn411 is glycosylated (N-linked (GlcNAc...) asparagine). N-linked (GlcNAc...) asparagine glycosylation occurs at Asn460. A glycan (N-linked (GlcNAc...) asparagine) is linked at Asn518. An N-linked (GlcNAc...) asparagine glycan is attached at Asn665. N-linked (GlcNAc...) asparagine glycans are attached at residues Asn716, Asn723, and Asn741. Residues 772 to 795 (LTYFGGAVASTIGLIMGGTLLALL) form a helical membrane-spanning segment. At 796-830 (RKRFRQKDDGKCPLNPHSHLGTYGVFTNAAFDPSP) the chain is on the cytoplasmic side. Cys807 carries S-palmitoyl cysteine; alternate lipidation. Cys807 carries S-stearoyl cysteine; alternate lipidation. An Endocytosis signal motif is present at residues 818–821 (YGVF). The interaction with SNX17 stretch occupies residues 821–830 (FTNAAFDPSP).

This sequence belongs to the selectin/LECAM family. As to quaternary structure, interacts with SNX17. Interacts with SELPLG/PSGL1 and PODXL2 and mediates neutrophil adhesion and leukocyte rolling. This interaction requires the sialyl-Lewis X epitope of SELPLG and PODXL2, and specific tyrosine sulfation on SELPLG. Interacts (via C-type lectin domain) with alpha-IIb/beta3 integrin ITGA2B:ITGB3 and alpha-V/beta-3 integrin ITGAV:ITGB3. Interacts with alpha5/beta1 integrin ITGA5:ITGB1 and alpha4/beta1 integrin ITGA4:ITGB. In terms of tissue distribution, stored in the alpha-granules of platelets and Weibel-Palade bodies of endothelial cells. Upon cell activation by agonists, P-selectin is transported rapidly to the cell surface.

It is found in the cell membrane. Ca(2+)-dependent receptor for myeloid cells that binds to carbohydrates on neutrophils and monocytes. Mediates the interaction of activated endothelial cells or platelets with leukocytes. The ligand recognized is sialyl-Lewis X. Mediates rapid rolling of leukocyte rolling over vascular surfaces during the initial steps in inflammation through interaction with SELPLG. Mediates cell-cell interactions and cell adhesion via the interaction with integrin alpha-IIb/beta3 (ITGA2B:ITGB3) and integrin alpha-V/beta-3 (ITGAV:ITGB3). The polypeptide is P-selectin (SELP) (Homo sapiens (Human)).